Reading from the N-terminus, the 156-residue chain is Small ribosomal subunit protein uS7 (156 aa).

This sequence belongs to the universal ribosomal protein uS7 family. In terms of assembly, part of the 30S ribosomal subunit. Contacts proteins S9 and S11.

In terms of biological role, one of the primary rRNA binding proteins, it binds directly to 16S rRNA where it nucleates assembly of the head domain of the 30S subunit. Is located at the subunit interface close to the decoding center, probably blocks exit of the E-site tRNA. The polypeptide is Small ribosomal subunit protein uS7 (Paramagnetospirillum magneticum (strain ATCC 700264 / AMB-1) (Magnetospirillum magneticum)).